Consider the following 557-residue polypeptide: Urocanate hydratase (557 aa).

Residues 1-20 (MSNPRHNEREVRSPRGDELN) are disordered. NAD(+)-binding positions include 52 to 53 (GG), Q130, 176 to 178 (GMG), E196, R201, 242 to 243 (NA), 263 to 267 (QTSAH), 273 to 274 (YL), and Y322. C410 is an active-site residue. Residue G492 coordinates NAD(+).

This sequence belongs to the urocanase family. NAD(+) serves as cofactor.

The protein localises to the cytoplasm. It carries out the reaction 4-imidazolone-5-propanoate = trans-urocanate + H2O. It functions in the pathway amino-acid degradation; L-histidine degradation into L-glutamate; N-formimidoyl-L-glutamate from L-histidine: step 2/3. Its function is as follows. Catalyzes the conversion of urocanate to 4-imidazolone-5-propionate. The protein is Urocanate hydratase of Brucella melitensis biotype 2 (strain ATCC 23457).